The sequence spans 1232 residues: Anion exchange protein 3 (1232 aa).

Positions 1-11 (MANGVIPPPGG) are enriched in pro residues. Disordered regions lie at residues 1-316 (MANG…KLDR) and 429-499 (NDDK…DSHR). The Cytoplasmic portion of the chain corresponds to 1-708 (MANGVIPPPG…DLRDALHSQC (708 aa)). The segment covering 58–75 (DPEKPSRSYSERDFEFHR) has biased composition (basic and acidic residues). 2 stretches are compositionally biased toward basic residues: residues 76 to 97 (HTSHHTHHPLSARLPPPHKLRR) and 104 to 113 (RHTRRKRKKE). Acidic residues predominate over residues 134-152 (VDEEEEEEEEEEGESEAEP). Phosphoserine is present on residues serine 167, serine 170, serine 175, and serine 198. The segment covering 267–279 (DDMKSHRLEDNPG) has biased composition (basic and acidic residues). The segment covering 280–289 (VRRHLVKKPS) has biased composition (basic residues). Arginine 295 is modified (omega-N-methylarginine). Positions 305 to 316 (LRRKKKKKKLDR) are enriched in basic residues. The segment covering 440-450 (NPSSSSMNSVL) has biased composition (polar residues). A compositionally biased stretch (basic and acidic residues) spans 481–499 (HDPDAKEKPLHMPGGDSHR). 5 helical membrane-spanning segments follow: residues 709–731 (VAAVLFIYFAALSPAITFGGLLG), 737–774 (LMGVSELIVSTAVLGVLFSLLGAQPLLVVGFSGPLLVF), 794–816 (VWVGLWLVVFVLALVAAEGSFLV), 826–847 (IFAFLISLIFIYETFYKLYKVF), and 893–910 (ALLSLILMLGTFFIAFFL). Residues 709–1232 (VAAVLFIYFA…DEYNELHMPV (524 aa)) form a membrane (anion exchange) region. At 911 to 925 (RKFRNSRFLGGKARR) the chain is on the cytoplasmic side. 5 consecutive transmembrane segments (helical) span residues 926–946 (IIGDFGIPISILVMVLVDYSI), 980–1002 (PFPPWMMVAAAVPALLVLILIFM), 1028–1049 (LLLIGSLGGLCGLFGLPWLTAA), 1083–1128 (VTGV…IQLS), and 1155–1191 (MHLFTCIQLGCIALLWVVKSTAASLAFPFLLLLTVPL). Cysteine 1165 carries the S-palmitoyl cysteine lipid modification.

This sequence belongs to the anion exchanger (TC 2.A.31) family.

It is found in the cell membrane. The enzyme catalyses hydrogencarbonate(in) + chloride(out) = hydrogencarbonate(out) + chloride(in). Sodium-independent anion exchanger which mediates the electroneutral exchange of chloride for bicarbonate ions across the cell membrane. May be involved in the regulation of intracellular pH, and the modulation of cardiac action potential. This Plecturocebus moloch (Dusky titi monkey) protein is Anion exchange protein 3 (SLC4A3).